The primary structure comprises 374 residues: Aminomethyltransferase (374 aa).

It belongs to the GcvT family. In terms of assembly, the glycine cleavage system is composed of four proteins: P, T, L and H.

It catalyses the reaction N(6)-[(R)-S(8)-aminomethyldihydrolipoyl]-L-lysyl-[protein] + (6S)-5,6,7,8-tetrahydrofolate = N(6)-[(R)-dihydrolipoyl]-L-lysyl-[protein] + (6R)-5,10-methylene-5,6,7,8-tetrahydrofolate + NH4(+). In terms of biological role, the glycine cleavage system catalyzes the degradation of glycine. The chain is Aminomethyltransferase from Caldanaerobacter subterraneus subsp. tengcongensis (strain DSM 15242 / JCM 11007 / NBRC 100824 / MB4) (Thermoanaerobacter tengcongensis).